The primary structure comprises 367 residues: Isocitrate dehydrogenase [NAD] regulatory subunit 2, mitochondrial (367 aa).

The transit peptide at 1–25 directs the protein to the mitochondrion; the sequence is MSRQSFSLLKNLRSIASGSKIQTRS.

This sequence belongs to the isocitrate and isopropylmalate dehydrogenases family. As to quaternary structure, heterooligomer of catalytic and regulatory subunits. As to expression, ubiquitous. Predominantly expressed in roots, stems and leaves.

Its subcellular location is the mitochondrion. Performs an essential role in the oxidative function of the citric acid cycle. This is Isocitrate dehydrogenase [NAD] regulatory subunit 2, mitochondrial (IDH2) from Arabidopsis thaliana (Mouse-ear cress).